The sequence spans 333 residues: Malate dehydrogenase (333 aa).

NAD(+)-binding positions include 10 to 15 and Asp-34; that span reads GGGQIG. Residues Arg-83 and Arg-89 each coordinate substrate. NAD(+) contacts are provided by residues Asn-96 and 119–121; that span reads ITN. Substrate-binding residues include Asn-121 and Arg-152. Catalysis depends on His-176, which acts as the Proton acceptor.

This sequence belongs to the LDH/MDH superfamily. MDH type 3 family.

The catalysed reaction is (S)-malate + NAD(+) = oxaloacetate + NADH + H(+). In terms of biological role, catalyzes the reversible oxidation of malate to oxaloacetate. This chain is Malate dehydrogenase, found in Parvibaculum lavamentivorans (strain DS-1 / DSM 13023 / NCIMB 13966).